We begin with the raw amino-acid sequence, 270 residues long: Orotidine 5'-phosphate decarboxylase (270 aa).

Residues Asp-43, 65-67 (KTH), 96-105 (DRKFGDIGST), Tyr-217, and Arg-236 contribute to the substrate site. Lys-98 (proton donor) is an active-site residue.

It belongs to the OMP decarboxylase family.

It catalyses the reaction orotidine 5'-phosphate + H(+) = UMP + CO2. Its pathway is pyrimidine metabolism; UMP biosynthesis via de novo pathway; UMP from orotate: step 2/2. In Aureobasidium pullulans (Black yeast), this protein is Orotidine 5'-phosphate decarboxylase (URA3).